Here is a 123-residue protein sequence, read N- to C-terminus: Large ribosomal subunit protein bL20 (123 aa).

A compositionally biased stretch (basic residues) spans 1–15; that stretch reads MARVKRSVNAKKKRR. Positions 1–23 are disordered; sequence MARVKRSVNAKKKRREVLDQASG.

It belongs to the bacterial ribosomal protein bL20 family.

Binds directly to 23S ribosomal RNA and is necessary for the in vitro assembly process of the 50S ribosomal subunit. It is not involved in the protein synthesizing functions of that subunit. The protein is Large ribosomal subunit protein bL20 of Cutibacterium acnes (strain DSM 16379 / KPA171202) (Propionibacterium acnes).